The following is a 208-amino-acid chain: Putative chemokine-related protein FP248 (208 aa).

A signal peptide spans 1–23 (MGTGGSLLCGCSLVLSCLCPSAS). The N-linked (GlcNAc...) asparagine glycan is linked to Asn29.

It localises to the secreted. The polypeptide is Putative chemokine-related protein FP248 (Homo sapiens (Human)).